Consider the following 387-residue polypeptide: Eukaryotic translation initiation factor 3 subunit M (387 aa).

Residues 181–340 (LSSKVMIELL…RKVHISSTMH (160 aa)) enclose the PCI domain.

Belongs to the eIF-3 subunit M family. As to quaternary structure, component of the eukaryotic translation initiation factor 3 (eIF-3) complex. The eIF-3 complex interacts with pix.

It localises to the cytoplasm. The protein resides in the golgi apparatus. In terms of biological role, component of the eukaryotic translation initiation factor 3 (eIF-3) complex, which is involved in protein synthesis of a specialized repertoire of mRNAs and, together with other initiation factors, stimulates binding of mRNA and methionyl-tRNAi to the 40S ribosome. The eIF-3 complex specifically targets and initiates translation of a subset of mRNAs involved in cell proliferation. The polypeptide is Eukaryotic translation initiation factor 3 subunit M (Drosophila pseudoobscura pseudoobscura (Fruit fly)).